Reading from the N-terminus, the 159-residue chain is Cyclic pyranopterin monophosphate synthase (159 aa).

Substrate-binding positions include 76–78 and 114–115; these read LCH and ME. Aspartate 129 is an active-site residue.

Belongs to the MoaC family. As to quaternary structure, homohexamer; trimer of dimers.

The catalysed reaction is (8S)-3',8-cyclo-7,8-dihydroguanosine 5'-triphosphate = cyclic pyranopterin phosphate + diphosphate. Its pathway is cofactor biosynthesis; molybdopterin biosynthesis. Its function is as follows. Catalyzes the conversion of (8S)-3',8-cyclo-7,8-dihydroguanosine 5'-triphosphate to cyclic pyranopterin monophosphate (cPMP). The sequence is that of Cyclic pyranopterin monophosphate synthase from Oleidesulfovibrio alaskensis (strain ATCC BAA-1058 / DSM 17464 / G20) (Desulfovibrio alaskensis).